Reading from the N-terminus, the 184-residue chain is UPF0397 protein SAS2570 (184 aa).

5 helical membrane passes run 11 to 31, 44 to 64, 77 to 97, 111 to 131, and 148 to 168; these read VVAIGIGAAVFVILGRFVVIP, AFLALISAIFGPFAGLMTGLV, AWWSWVICSGIIGCLYGWIGL, MIYFNIGQIIANIICWALIAP, and QGVISAVLNIISVGIIGTILL.

Belongs to the UPF0397 family.

It is found in the cell membrane. The polypeptide is UPF0397 protein SAS2570 (Staphylococcus aureus (strain MSSA476)).